Consider the following 701-residue polypeptide: Glycine--tRNA ligase beta subunit (701 aa).

Belongs to the class-II aminoacyl-tRNA synthetase family. In terms of assembly, tetramer of two alpha and two beta subunits.

The protein resides in the cytoplasm. The enzyme catalyses tRNA(Gly) + glycine + ATP = glycyl-tRNA(Gly) + AMP + diphosphate. This chain is Glycine--tRNA ligase beta subunit, found in Nitratidesulfovibrio vulgaris (strain DSM 19637 / Miyazaki F) (Desulfovibrio vulgaris).